Reading from the N-terminus, the 207-residue chain is Thiamine-phosphate synthase (207 aa).

Residues 37–41 and N69 each bind 4-amino-2-methyl-5-(diphosphooxymethyl)pyrimidine; that span reads QLREK. Mg(2+) is bound by residues D70 and D89. 4-amino-2-methyl-5-(diphosphooxymethyl)pyrimidine is bound at residue S108. 134 to 136 contacts 2-[(2R,5Z)-2-carboxy-4-methylthiazol-5(2H)-ylidene]ethyl phosphate; sequence TGS. Residue K137 participates in 4-amino-2-methyl-5-(diphosphooxymethyl)pyrimidine binding. Residues G165 and 185–186 each bind 2-[(2R,5Z)-2-carboxy-4-methylthiazol-5(2H)-ylidene]ethyl phosphate; that span reads IS.

This sequence belongs to the thiamine-phosphate synthase family. Mg(2+) serves as cofactor.

The catalysed reaction is 2-[(2R,5Z)-2-carboxy-4-methylthiazol-5(2H)-ylidene]ethyl phosphate + 4-amino-2-methyl-5-(diphosphooxymethyl)pyrimidine + 2 H(+) = thiamine phosphate + CO2 + diphosphate. It carries out the reaction 2-(2-carboxy-4-methylthiazol-5-yl)ethyl phosphate + 4-amino-2-methyl-5-(diphosphooxymethyl)pyrimidine + 2 H(+) = thiamine phosphate + CO2 + diphosphate. It catalyses the reaction 4-methyl-5-(2-phosphooxyethyl)-thiazole + 4-amino-2-methyl-5-(diphosphooxymethyl)pyrimidine + H(+) = thiamine phosphate + diphosphate. Its pathway is cofactor biosynthesis; thiamine diphosphate biosynthesis; thiamine phosphate from 4-amino-2-methyl-5-diphosphomethylpyrimidine and 4-methyl-5-(2-phosphoethyl)-thiazole: step 1/1. Its function is as follows. Condenses 4-methyl-5-(beta-hydroxyethyl)thiazole monophosphate (THZ-P) and 2-methyl-4-amino-5-hydroxymethyl pyrimidine pyrophosphate (HMP-PP) to form thiamine monophosphate (TMP). This chain is Thiamine-phosphate synthase, found in Desulfitobacterium hafniense (strain Y51).